A 165-amino-acid chain; its full sequence is V-type proton ATPase subunit c2 (165 aa).

Residues 1–12 lie on the Lumenal side of the membrane; that stretch reads MASTFSGDETAP. The helical transmembrane segment at 13–33 threads the bilayer; it reads FFGFLGAAAALVFSCMGAAYG. The Cytoplasmic portion of the chain corresponds to 34 to 55; it reads TAKSGVGVASMGVMRPELVMKS. A helical transmembrane segment spans residues 56 to 76; sequence IVPVVMAGVLGIYGLIIAVII. The Lumenal portion of the chain corresponds to 77-95; it reads STGINPKAKSYYLFDGYAH. The helical transmembrane segment at 96–117 threads the bilayer; sequence LSSGLACGLAGLSAGMAIGIVG. Residues 118–129 lie on the Cytoplasmic side of the membrane; the sequence is DAGVRANAQQPK. A helical transmembrane segment spans residues 130 to 155; it reads LFVGMILILIFAEALALYGLIVGIIL. Residues 156-165 lie on the Lumenal side of the membrane; the sequence is SSRAGQSRAE.

The protein belongs to the V-ATPase proteolipid subunit family. V-ATPase is a heteromultimeric enzyme composed of a peripheral catalytic V1 complex (components A to H) attached to an integral membrane V0 proton pore complex (components: a, c, c'', d and e). The proteolipid components c and c'' are present as a hexameric ring that forms the proton-conducting pore. In terms of tissue distribution, expressed in leaf, root, flower and silique, with lower expression in roots.

It is found in the vacuole membrane. Proton-conducting pore forming subunit of the membrane integral V0 complex of vacuolar ATPase. V-ATPase is responsible for acidifying a variety of intracellular compartments in eukaryotic cells. This Arabidopsis thaliana (Mouse-ear cress) protein is V-type proton ATPase subunit c2 (VHA-c2).